The following is a 424-amino-acid chain: Mitogen-activated protein kinase mpkA (424 aa).

The 292-residue stretch at 23-314 folds into the Protein kinase domain; sequence YNVTKELGQG…VEEALEHPYL (292 aa). Residues 29 to 37 and Lys-52 contribute to the ATP site; that span reads LGQGAYGIV. A disordered region spans residues 375-424; the sequence is QQIAQQTNVPIPDHQQGGWKQEEPKPQEVHAAGGHVNDLESSLQRGMDVQ.

It belongs to the protein kinase superfamily. Ser/Thr protein kinase family. In terms of assembly, interacts with flbB, flbC, brlA, and rasB. Interacts with fmqA and fmqC. Interacts with hsp90. Mg(2+) is required as a cofactor. Post-translationally, phosphorylated by the upstreamm MAPKK mkk2. Phosphorylation is induced during asexual development. Phosphorylation is regulated by rlmA.

It catalyses the reaction L-seryl-[protein] + ATP = O-phospho-L-seryl-[protein] + ADP + H(+). The enzyme catalyses L-threonyl-[protein] + ATP = O-phospho-L-threonyl-[protein] + ADP + H(+). Activated by threonine and tyrosine phosphorylation by the upstreamm MAPKK mkk2. In terms of biological role, mitogen-activated protein kinase; part of cell wall integrity (CWI) signaling pathway composed of pkcA, the bck1-mkk2-mpka MAPK cascade and the downstream rlmA transcription regulator. The CWI signaling pathway regulates cell wall integrity and pyomelanin formation. CWI also controls oxidative stress response, gliotoxin production, iron adaptation and asexual development. Finally, CWI is constitutively required for A.fumigatus to cope with the temperature increase found in the mammalian lung environment, during infection. MpkA positively modulates the expression of fumiquinazoline cluster during conidiogenesis and directly phosphorylates fmqC, and perhaps also fmqA. The sequence is that of Mitogen-activated protein kinase mpkA from Aspergillus fumigatus (strain ATCC MYA-4609 / CBS 101355 / FGSC A1100 / Af293) (Neosartorya fumigata).